The primary structure comprises 411 residues: MQVYAVGGAIRDELLGKPSQDRDYVVVGATPAQMEAAGYKPVGKDFPVFLHPRTKEEYALARTERKTAMGYKGFAFYCEPDVTLEDDLVRRDLTINAMARAVDADGNLTGPVIDPHGGQRDLAARLFRHVSDAFAEDPVRILRVARFAARFHEFGVAAETMRLMREMVAAGEVDALVPERVWQELARGLMEAKPSRMFEVLRECGALARLLPELERLWGVPQRADYHPEIDTGVHVMMVIDQAAAMGAPLTVRFAALVHDLGKGTTPADVLPRHIGHESRSAQLLEDVCVRLRVPNECRDLALVVAREHGNIHRSQEFSAAAVMRLLERCDALRKPARFAEALQACEADLRGRKGFESSAYPQAARLLAALEAAAAVDAGAIARACGDDVGQIRDRVQAARVAAVAARIGG.

The ATP site is built by Gly8 and Arg11. Residues Gly8 and Arg11 each coordinate CTP. Positions 21 and 23 each coordinate Mg(2+). Residues Arg91, Arg143, and Arg146 each contribute to the ATP site. CTP-binding residues include Arg91, Arg143, and Arg146. An HD domain is found at 232-333; sequence TGVHVMMVID…MRLLERCDAL (102 aa).

The protein belongs to the tRNA nucleotidyltransferase/poly(A) polymerase family. Bacterial CCA-adding enzyme type 1 subfamily. In terms of assembly, monomer. Can also form homodimers and oligomers. Requires Mg(2+) as cofactor. Ni(2+) serves as cofactor.

It carries out the reaction a tRNA precursor + 2 CTP + ATP = a tRNA with a 3' CCA end + 3 diphosphate. The enzyme catalyses a tRNA with a 3' CCA end + 2 CTP + ATP = a tRNA with a 3' CCACCA end + 3 diphosphate. Its function is as follows. Catalyzes the addition and repair of the essential 3'-terminal CCA sequence in tRNAs without using a nucleic acid template. Adds these three nucleotides in the order of C, C, and A to the tRNA nucleotide-73, using CTP and ATP as substrates and producing inorganic pyrophosphate. tRNA 3'-terminal CCA addition is required both for tRNA processing and repair. Also involved in tRNA surveillance by mediating tandem CCA addition to generate a CCACCA at the 3' terminus of unstable tRNAs. While stable tRNAs receive only 3'-terminal CCA, unstable tRNAs are marked with CCACCA and rapidly degraded. The chain is Multifunctional CCA protein from Cupriavidus necator (strain ATCC 17699 / DSM 428 / KCTC 22496 / NCIMB 10442 / H16 / Stanier 337) (Ralstonia eutropha).